The sequence spans 482 residues: Catalase (482 aa).

A compositionally biased stretch (polar residues) spans 1 to 23; the sequence is MSQNKTLTTASGPPVADNQNSRS. Residues 1 to 28 form a disordered region; it reads MSQNKTLTTASGPPVADNQNSRSAGPRG. Residues histidine 55 and asparagine 128 contribute to the active site. A heme-binding site is contributed by tyrosine 338. The segment at 370 to 395 is disordered; sequence SMAFGSNGGAAPNYEPNSYADAPKQA.

It belongs to the catalase family. Heme serves as cofactor.

It catalyses the reaction 2 H2O2 = O2 + 2 H2O. In terms of biological role, decomposes hydrogen peroxide into water and oxygen; serves to protect cells from the toxic effects of hydrogen peroxide. In Onchocerca volvulus endobacterium, this protein is Catalase (cat).